The primary structure comprises 801 residues: MERLWGLFQRAQQLSPRSSQTVYQRVEGPRKGHLEEEEEDGEEGAETLAHFCPMELRGPEPLGSRPRQPNLIPWAAAGRRAAPYLVLTALLIFTGAFLLGYVAFRGSCQACGDSVLVVSEDVNYEPDLDFHQGRLYWSDLQAMFLQFLGEGRLEDTIRQTSLRERVAGSAGMAALTQDIRAALSRQKLDHVWTDTHYVGLQFPDPAHPNTLHWVDEAGKVGEQLPLEDPDVYCPYSAIGNVTGELVYAHYGRPEDLQDLRARGVDPVGRLLLVRVGVISFAQKVTNAQDFGAQGVLIYPEPADFSQDPPKPSLSSQQAVYGHVHLGTGDPYTPGFPSFNQTQFPPVASSGLPSIPAQPISADIASRLLRKLKGPVAPQEWQGSLLGSPYHLGPGPRLRLVVNNHRTSTPINNIFGCIEGRSEPDHYVVIGAQRDAWGPGAAKSAVGTAILLELVRTFSSMVSNGFRPRRSLLFISWDGGDFGSVGSTEWLEGYLSVLHLKAVVYVSLDNAVLGDDKFHAKTSPLLTSLIESVLKQVDSPNHSGQTLYEQVVFTNPSWDAEVIRPLPMDSSAYSFTAFVGVPAVEFSFMEDDQAYPFLHTKEDTYENLHKVLQGRLPAVAQAVAQLAGQLLIRLSHDRLLPLDFGRYGDVVLRHIGNLNEFSGDLKARGLTLQWVYSARGDYIRAAEKLRQEIYSSEERDERLTRMYNVRIMRVEFYFLSQYVSPADSPFRHIFMGRGDHTLGALLDHLRLLRSNSSGTPGATSSTGFQESRFRRQLALLTWTLQGAANALSGDVWNIDNNF.

Over 1–83 the chain is Cytoplasmic; that stretch reads MERLWGLFQR…WAAAGRRAAP (83 aa). The tract at residues 16-45 is disordered; sequence PRSSQTVYQRVEGPRKGHLEEEEEDGEEGA. Residues 23 to 26 carry the Endocytosis signal motif; it reads YQRV. The span at 35–45 shows a compositional bias: acidic residues; it reads EEEEEDGEEGA. A helical; Signal-anchor for type II membrane protein membrane pass occupies residues 84–104; it reads YLVLTALLIFTGAFLLGYVAF. Residues 105–801 lie on the Extracellular side of the membrane; sequence RGSCQACGDS…GDVWNIDNNF (697 aa). N-linked (GlcNAc...) asparagine glycans are attached at residues N240, N339, N540, and N754.

It belongs to the peptidase M28 family. M28B subfamily. As to quaternary structure, homodimer. As to expression, predominantly expressed in liver. While the alpha form is also expressed in spleen, lung, muscle, prostate and peripheral blood mononuclear cells, the beta form is expressed in all tissues tested, albeit weakly.

It is found in the cell membrane. Its subcellular location is the cytoplasm. Functionally, mediates cellular uptake of transferrin-bound iron in a non-iron dependent manner. May be involved in iron metabolism, hepatocyte function and erythrocyte differentiation. The polypeptide is Transferrin receptor protein 2 (TFR2) (Homo sapiens (Human)).